A 510-amino-acid polypeptide reads, in one-letter code: MFPISVGWIAFAGVLLTLIALNYFIVKYYSDKHESGKITTIISVIGLTLTLLCVMLIPVDILNVSTMSHSDGTQISPYSISQRTEGVKMLYYILYGSILGVSLILVPFAYFYHEEYDENIPTCSRVYAGCKFTIFFILFTIILLVVGAFVRPGSKPIDDQNVKDWINDEVLNQNAIESSVLFAISCLTVLGFLVFAVYTSYGLSAFPIGLIKGKKRTDDDKSDINKDLWKAKEKSSFYSSKYASGKSLSEKEQSTLSLLRGKERALSKRSERLDNSNKGFRKILVIFRPFAFIFGFIFILVSLLIIISIVLSLVDKISSSVCGSACGFLSTYPQLKNPFDIILTKLAPYFPLDYIIIGGLIFFIYSCTLSGITRIGIRFLWINMFEFGYRKTFPQGLLLASVLLMLSNLCLNMQIVNLAPRYVMYGAQVYLNGTSVIPCTINAPTDLCIMSEIGLLTSRIQLGISFFGIVFYYGTWVIVATFILGLAVSIFKRRPSAALSYSGDSDEEEI.

A helical membrane pass occupies residues 1-21 (MFPISVGWIAFAGVLLTLIAL). The Extracellular segment spans residues 22-40 (NYFIVKYYSDKHESGKITT). A helical transmembrane segment spans residues 41-61 (IISVIGLTLTLLCVMLIPVDI). The Cytoplasmic portion of the chain corresponds to 62–88 (LNVSTMSHSDGTQISPYSISQRTEGVK). Residues 89–109 (MLYYILYGSILGVSLILVPFA) form a helical membrane-spanning segment. The Extracellular portion of the chain corresponds to 110–129 (YFYHEEYDENIPTCSRVYAG). The helical transmembrane segment at 130–150 (CKFTIFFILFTIILLVVGAFV) threads the bilayer. Topologically, residues 151–178 (RPGSKPIDDQNVKDWINDEVLNQNAIES) are cytoplasmic. The chain crosses the membrane as a helical span at residues 179-199 (SVLFAISCLTVLGFLVFAVYT). Residues 200–289 (SYGLSAFPIG…FRKILVIFRP (90 aa)) lie on the Extracellular side of the membrane. A helical transmembrane segment spans residues 290-310 (FAFIFGFIFILVSLLIIISIV). Residues 311–345 (LSLVDKISSSVCGSACGFLSTYPQLKNPFDIILTK) lie on the Cytoplasmic side of the membrane. A helical transmembrane segment spans residues 346 to 366 (LAPYFPLDYIIIGGLIFFIYS). Residues 367 to 395 (CTLSGITRIGIRFLWINMFEFGYRKTFPQ) are Extracellular-facing. A helical membrane pass occupies residues 396–416 (GLLLASVLLMLSNLCLNMQIV). The Cytoplasmic portion of the chain corresponds to 417 to 465 (NLAPRYVMYGAQVYLNGTSVIPCTINAPTDLCIMSEIGLLTSRIQLGIS). A helical membrane pass occupies residues 466–486 (FFGIVFYYGTWVIVATFILGL). Topologically, residues 487-510 (AVSIFKRRPSAALSYSGDSDEEEI) are extracellular.

The protein belongs to the LIMR family. LMBRD1 subfamily.

The protein localises to the lysosome membrane. Probable lysosomal cobalamin transporter. Required to export cobalamin from lysosomes allowing its conversion to cofactors. The protein is Probable lysosomal cobalamin transporter (lmbrd1) of Dictyostelium discoideum (Social amoeba).